The sequence spans 597 residues: Aspartate--tRNA(Asp/Asn) ligase (597 aa).

Glu-175 is a binding site for L-aspartate. The segment at 199-202 (QQYK) is aspartate. Arg-221 and His-456 together coordinate L-aspartate. 221-223 (RDE) is a binding site for ATP. Glu-490 is a binding site for ATP. Arg-497 contributes to the L-aspartate binding site. Residue 542-545 (GVDR) coordinates ATP.

It belongs to the class-II aminoacyl-tRNA synthetase family. Type 1 subfamily. In terms of assembly, homodimer.

Its subcellular location is the cytoplasm. The catalysed reaction is tRNA(Asx) + L-aspartate + ATP = L-aspartyl-tRNA(Asx) + AMP + diphosphate. Its function is as follows. Aspartyl-tRNA synthetase with relaxed tRNA specificity since it is able to aspartylate not only its cognate tRNA(Asp) but also tRNA(Asn). Reaction proceeds in two steps: L-aspartate is first activated by ATP to form Asp-AMP and then transferred to the acceptor end of tRNA(Asp/Asn). The protein is Aspartate--tRNA(Asp/Asn) ligase of Beijerinckia indica subsp. indica (strain ATCC 9039 / DSM 1715 / NCIMB 8712).